The primary structure comprises 32 residues: U3-cyrtautoxin-As1a (32 aa).

3 cysteine pairs are disulfide-bonded: cysteine 4-cysteine 19, cysteine 11-cysteine 24, and cysteine 18-cysteine 29.

The protein belongs to the neurotoxin 14 (magi-1) family. To aptotoxin III. In terms of tissue distribution, expressed by the venom gland.

Its subcellular location is the secreted. Is both paralytic and lethal, when injected into lepidopteran larvae. Is a slower acting toxin, being lethal at 24 hours, but not paralytic at 1 hour post-injection. The protein is U3-cyrtautoxin-As1a of Apomastus schlingeri (Trap-door spider).